Here is a 972-residue protein sequence, read N- to C-terminus: Isoleucine--tRNA ligase (972 aa).

A 'HIGH' region motif is present at residues 63–73 (PYANGNIHIGH). Residue glutamate 603 coordinates L-isoleucyl-5'-AMP. A 'KMSKS' region motif is present at residues 644 to 648 (KMSKS). Lysine 647 is an ATP binding site.

The protein belongs to the class-I aminoacyl-tRNA synthetase family. IleS type 1 subfamily. In terms of assembly, monomer.

Its subcellular location is the cytoplasm. It carries out the reaction tRNA(Ile) + L-isoleucine + ATP = L-isoleucyl-tRNA(Ile) + AMP + diphosphate. Catalyzes the attachment of isoleucine to tRNA(Ile). As IleRS can inadvertently accommodate and process structurally similar amino acids such as valine, to avoid such errors it has two additional distinct tRNA(Ile)-dependent editing activities. One activity is designated as 'pretransfer' editing and involves the hydrolysis of activated Val-AMP. The other activity is designated 'posttransfer' editing and involves deacylation of mischarged Val-tRNA(Ile). This Brucella melitensis biotype 1 (strain ATCC 23456 / CCUG 17765 / NCTC 10094 / 16M) protein is Isoleucine--tRNA ligase.